The following is a 113-amino-acid chain: Putative pterin-4-alpha-carbinolamine dehydratase (113 aa).

It belongs to the pterin-4-alpha-carbinolamine dehydratase family.

It catalyses the reaction (4aS,6R)-4a-hydroxy-L-erythro-5,6,7,8-tetrahydrobiopterin = (6R)-L-erythro-6,7-dihydrobiopterin + H2O. The sequence is that of Putative pterin-4-alpha-carbinolamine dehydratase from Pelodictyon phaeoclathratiforme (strain DSM 5477 / BU-1).